The sequence spans 340 residues: Lipopolysaccharide core biosynthesis glycosyltransferase LpsE (340 aa).

This sequence belongs to the glycosyltransferase group 1 family. Glycosyltransferase 4 subfamily.

Its pathway is bacterial outer membrane biogenesis; LPS core biosynthesis. The sequence is that of Lipopolysaccharide core biosynthesis glycosyltransferase LpsE (lpsE) from Rhizobium meliloti (strain 1021) (Ensifer meliloti).